The following is a 370-amino-acid chain: Aminomethyltransferase (370 aa).

It belongs to the GcvT family. As to quaternary structure, the glycine cleavage system is composed of four proteins: P, T, L and H.

It carries out the reaction N(6)-[(R)-S(8)-aminomethyldihydrolipoyl]-L-lysyl-[protein] + (6S)-5,6,7,8-tetrahydrofolate = N(6)-[(R)-dihydrolipoyl]-L-lysyl-[protein] + (6R)-5,10-methylene-5,6,7,8-tetrahydrofolate + NH4(+). Functionally, the glycine cleavage system catalyzes the degradation of glycine. This is Aminomethyltransferase from Clostridium botulinum (strain Langeland / NCTC 10281 / Type F).